Here is a 282-residue protein sequence, read N- to C-terminus: Bis(5'-nucleosyl)-tetraphosphatase, symmetrical (282 aa).

The protein belongs to the Ap4A hydrolase family.

It catalyses the reaction P(1),P(4)-bis(5'-adenosyl) tetraphosphate + H2O = 2 ADP + 2 H(+). Functionally, hydrolyzes diadenosine 5',5'''-P1,P4-tetraphosphate to yield ADP. This Burkholderia thailandensis (strain ATCC 700388 / DSM 13276 / CCUG 48851 / CIP 106301 / E264) protein is Bis(5'-nucleosyl)-tetraphosphatase, symmetrical.